A 554-amino-acid chain; its full sequence is Undecaprenyl phosphate-alpha-4-amino-4-deoxy-L-arabinose arabinosyl transferase (554 aa).

11 helical membrane passes run 4–24, 87–107, 115–135, 178–198, 206–226, 262–282, 293–313, 315–335, 351–371, 384–404, and 414–434; these read LKDS…LLPV, FGSI…ATLL, VLAT…TYAV, FMTK…PIVI, LVVF…PWAL, YLPI…GALF, ELFF…VAKG, LPTY…AYAT, VINL…GLGL, QKVW…FITL, and AAAC…QQVV.

It belongs to the glycosyltransferase 83 family.

The protein localises to the cell inner membrane. It carries out the reaction 4-amino-4-deoxy-alpha-L-arabinopyranosyl di-trans,octa-cis-undecaprenyl phosphate + lipid IVA = lipid IIA + di-trans,octa-cis-undecaprenyl phosphate.. Its pathway is lipopolysaccharide metabolism; 4-amino-4-deoxy-beta-L-arabinose-lipid A biosynthesis. Functionally, catalyzes the transfer of the L-Ara4N moiety of the glycolipid undecaprenyl phosphate-alpha-L-Ara4N to lipid A. The modified arabinose is attached to lipid A and is required for resistance to polymyxin and cationic antimicrobial peptides. The protein is Undecaprenyl phosphate-alpha-4-amino-4-deoxy-L-arabinose arabinosyl transferase of Yersinia pseudotuberculosis serotype O:3 (strain YPIII).